We begin with the raw amino-acid sequence, 100 residues long: Integration host factor subunit alpha (100 aa).

This sequence belongs to the bacterial histone-like protein family. In terms of assembly, heterodimer of an alpha and a beta chain.

Functionally, this protein is one of the two subunits of integration host factor, a specific DNA-binding protein that functions in genetic recombination as well as in transcriptional and translational control. This Alcanivorax borkumensis (strain ATCC 700651 / DSM 11573 / NCIMB 13689 / SK2) protein is Integration host factor subunit alpha.